The chain runs to 120 residues: Glycophorin-A (120 aa).

Gln1 carries the post-translational modification Pyrrolidone carboxylic acid. The tract at residues 1–40 (QTIATGSPPIAGTSDLSTITSAATPTFTTEQDGREQGDGL) is disordered. 2 O-linked (GalNAc...) threonine glycosylation sites follow: Thr2 and Thr5. Ser7 is a glycosylation site (O-linked (GalNAc...) serine). O-linked (GalNAc...) threonine glycosylation is present at Thr13. The O-linked (GalNAc...) serine glycan is linked to Ser17. Residues 17–29 (STITSAATPTFTT) show a composition bias toward low complexity. O-linked (GalNAc...) threonine glycosylation is found at Thr18 and Thr20. Ser21 carries an O-linked (GalNAc...) serine glycan. O-linked (GalNAc...) threonine glycans are attached at residues Thr24 and Thr28. A helical transmembrane segment spans residues 50–72 (VITVIILGVMAGIIGIILLLAYV). Residues 78–120 (KRPPADVPPPASTVPSADAPPPVSEDDETSLTSVETDYPGDSQ) are disordered. Residues 82–100 (ADVPPPASTVPSADAPPPV) show a composition bias toward pro residues. Over residues 107–120 (SLTSVETDYPGDSQ) the composition is skewed to polar residues. Ser119 is modified (phosphoserine).

Belongs to the glycophorin-A family. As to quaternary structure, homodimer.

The protein resides in the membrane. Glycophorin A is the major intrinsic membrane sialoglycoprotein of the erythrocyte. Appears to be important for the function of SLC4A1 and is required for high activity of SLC4A1. May be involved in translocation of SLC4A1 to the plasma membrane. This chain is Glycophorin-A, found in Equus caballus (Horse).